A 57-amino-acid chain; its full sequence is Large ribosomal subunit protein eL20 (57 aa).

The protein belongs to the eukaryotic ribosomal protein eL20 family. Part of the 50S ribosomal subunit. Binds 23S rRNA.

This chain is Large ribosomal subunit protein eL20, found in Halorhabdus utahensis (strain DSM 12940 / JCM 11049 / AX-2).